Here is a 136-residue protein sequence, read N- to C-terminus: Large ribosomal subunit protein eL27 (136 aa).

The region spanning 5–40 is the KOW domain; the sequence is MKPGKVVMVLAGRYAGRKAVIVKNIDDGTADRPYSH.

The protein belongs to the eukaryotic ribosomal protein eL27 family. Component of the large ribosomal subunit.

The protein localises to the cytoplasm. It is found in the cytosol. The protein resides in the rough endoplasmic reticulum. Functionally, component of the large ribosomal subunit. This chain is Large ribosomal subunit protein eL27 (rpl27), found in Ictalurus punctatus (Channel catfish).